A 160-amino-acid polypeptide reads, in one-letter code: Globin-like protein (160 aa).

One can recognise a Globin domain in the interval 2-152 (SMTRQEIQDL…FNAECQVHLK (151 aa)). Histidine 101 contacts heme.

Belongs to the globin family.

The protein localises to the cytoplasm. Functionally, may be a globin and may play a role in oxygen transport. The chain is Globin-like protein (glb-1) from Caenorhabditis briggsae.